Consider the following 1014-residue polypeptide: Protein argonaute 2 (1014 aa).

The span at 1-15 shows a compositional bias: basic and acidic residues; sequence MERGGYRGGRGDGRG. A disordered region spans residues 1–137; that stretch reads MERGGYRGGR…PSTSTTVVSE (137 aa). 2 stretches are compositionally biased toward gly residues: residues 18-29 and 49-58; these read GRGYGGGGGGGE and RGGGNRGQGR. A compositionally biased stretch (low complexity) spans 83–104; sequence QFQQPRPQVAPQPSQAPASYAG. Residues 105–114 are compositionally biased toward gly residues; that stretch reads SVGGVAGRGA. Low complexity predominate over residues 121 to 137; sequence VPSDSASPSTSTTVVSE. The PAZ domain maps to 369-482; sequence SVIEYLKLYF…VPMEFCDLVE (114 aa). In terms of domain architecture, Piwi spans 666 to 965; it reads LVLCAMSRKD…VAFRGRMYHE (300 aa). Interaction with guide RNA stretches follow at residues 857–858, 900–908, and 937–959; these read KR, HHGGIGTSK, and FTRC…VAFR.

It belongs to the argonaute family. Ago subfamily. In terms of assembly, interacts with NERD.

Involved in RNA-mediated post-transcriptional gene silencing (PTGS). Main component of the RNA-induced silencing complex (RISC) that binds to a short guide RNA such as microRNA (miRNA) or small interfering RNA (siRNA). RISC uses the mature miRNA or siRNA as a guide for slicer-directed cleavage of homologous mRNAs to repress gene expression. Associates mainly with siRNAs of 21 nucleotide in length and preferentially recruits small RNAs with a 5' terminal adenosine. Probably involved in antiviral RNA silencing. Associates with siRNA derived from cucumber mosaic virus (CMV). Targeted by turnip yellows virus (TuYV) protein P0 (via F-box-like domain) for probable proteasome degradation and thereby inactivating AGO2 function in RNA silencing. Required to direct NERD-dependent DNA methylation and silencing. This Arabidopsis thaliana (Mouse-ear cress) protein is Protein argonaute 2 (AGO2).